Here is a 453-residue protein sequence, read N- to C-terminus: DNA repair protein RadA (453 aa).

A C4-type zinc finger spans residues 10 to 27; sequence CQECGYQSPKYLGRCPNC. 95 to 102 contacts ATP; sequence GDPGIGKS. The RadA KNRFG motif motif lies at 251-255; the sequence is KNRFG. The interval 350-453 is lon-protease-like; it reads DAYLKSAGGV…VGQVLNAVFS (104 aa).

It belongs to the RecA family. RadA subfamily.

Its function is as follows. DNA-dependent ATPase involved in processing of recombination intermediates, plays a role in repairing DNA breaks. Stimulates the branch migration of RecA-mediated strand transfer reactions, allowing the 3' invading strand to extend heteroduplex DNA faster. Binds ssDNA in the presence of ADP but not other nucleotides, has ATPase activity that is stimulated by ssDNA and various branched DNA structures, but inhibited by SSB. Does not have RecA's homology-searching function. In Streptococcus pyogenes serotype M1, this protein is DNA repair protein RadA.